We begin with the raw amino-acid sequence, 499 residues long: Phenylalanine--tRNA ligase alpha subunit (499 aa).

L-phenylalanine-binding positions include Thr342, 381 to 383, and Phe422; that span reads QID. Glu424 is a binding site for Mg(2+). Phe447 serves as a coordination point for L-phenylalanine.

This sequence belongs to the class-II aminoacyl-tRNA synthetase family. Phe-tRNA synthetase alpha subunit type 2 subfamily. As to quaternary structure, tetramer of two alpha and two beta subunits. The cofactor is Mg(2+).

It is found in the cytoplasm. It carries out the reaction tRNA(Phe) + L-phenylalanine + ATP = L-phenylalanyl-tRNA(Phe) + AMP + diphosphate + H(+). The polypeptide is Phenylalanine--tRNA ligase alpha subunit (Thermococcus gammatolerans (strain DSM 15229 / JCM 11827 / EJ3)).